Here is a 113-residue protein sequence, read N- to C-terminus: Mitochondrial import inner membrane translocase subunit PAM16 like 1 (113 aa).

A mitochondrion-targeting transit peptide spans 1–48 (MAARVLASVIVMGSGIIARACTQAYRQALANASKTGVAHEATQTIKRG). The J-like stretch occupies residues 55-104 (EARQILGVTEKSSWDEILKKYDTLFERNAQNGSFYLQSKVHRAKECLETA).

It belongs to the TIM16/PAM16 family. In terms of tissue distribution, expressed at low levels in seedlings, rosettes and inflorescence.

Its subcellular location is the mitochondrion inner membrane. Its function is as follows. Regulates ATP-dependent protein translocation into the mitochondrial matrix. This chain is Mitochondrial import inner membrane translocase subunit PAM16 like 1, found in Arabidopsis thaliana (Mouse-ear cress).